A 184-amino-acid polypeptide reads, in one-letter code: Ribosome-recycling factor (184 aa).

It belongs to the RRF family.

The protein localises to the cytoplasm. Responsible for the release of ribosomes from messenger RNA at the termination of protein biosynthesis. May increase the efficiency of translation by recycling ribosomes from one round of translation to another. In Borrelia recurrentis (strain A1), this protein is Ribosome-recycling factor.